Here is a 189-residue protein sequence, read N- to C-terminus: Interleukin-23 subunit alpha (189 aa).

An N-terminal signal peptide occupies residues M1–T19.

This sequence belongs to the IL-6 superfamily. Heterodimer with IL12B; disulfide-linked. The heterodimer is known as interleukin IL-23. Interacts with IL23R; this interaction enables recruitment of IL12RB1.

It is found in the secreted. Its function is as follows. Associates with IL12B to form the pro-inflammatory cytokine IL-23 that plays different roles in innate and adaptive immunity. Released by antigen-presenting cells such as dendritic cells or macrophages, binds to a heterodimeric receptor complex composed of IL12RB1 and IL23R to activate JAK2 and TYK2 which then phosphorylate the receptor to form a docking site leading to the phosphorylation of STAT3 and STAT4. This process leads to activation of several pathways including p38 MAPK or NF-kappa-B and promotes the production of pro-inflammatory cytokines such as interleukin-17A/IL17A. In turn, participates in the early and effective intracellular bacterial clearance. Promotes the expansion and survival of T-helper 17 cells, a CD4-positive helper T-cell subset that produces IL-17, as well as other IL-17-producing cells. This chain is Interleukin-23 subunit alpha (IL23A), found in Cavia porcellus (Guinea pig).